We begin with the raw amino-acid sequence, 309 residues long: 2-phospho-L-lactate transferase (309 aa).

7,8-didemethyl-8-hydroxy-5-deazariboflavin-binding residues include D50 and K89.

This sequence belongs to the CofD family. In terms of assembly, homodimer. Requires Mg(2+) as cofactor.

It carries out the reaction (2S)-lactyl-2-diphospho-5'-guanosine + 7,8-didemethyl-8-hydroxy-5-deazariboflavin = oxidized coenzyme F420-0 + GMP + H(+). The protein operates within cofactor biosynthesis; coenzyme F420 biosynthesis. In terms of biological role, catalyzes the transfer of the 2-phospholactate moiety from (2S)-lactyl-2-diphospho-5'-guanosine to 7,8-didemethyl-8-hydroxy-5-deazariboflavin (FO) with the formation of oxidized coenzyme F420-0 and GMP. In Methanococcus maripaludis (strain C6 / ATCC BAA-1332), this protein is 2-phospho-L-lactate transferase.